Here is a 518-residue protein sequence, read N- to C-terminus: Protein CYCLOPS (518 aa).

The segment at 401–451 is disordered; the sequence is DKKRKSLERYGSITSAVSDDKGDTTKKRRVERSRKMAEAKERNSTPSVPSD. Short sequence motifs (nuclear localization signal) lie at residues 402 to 405 and 426 to 429; these read KKRK and KKRR. Basic and acidic residues predominate over residues 433–443; it reads SRKMAEAKERN. Residues 452-518 are a coiled coil; the sequence is MQAVLKRCEN…ERILSETEKM (67 aa).

It belongs to the CYCLOPS family. Forms homodimers. Interacts with CCAMK. Phosphorylated at the N-terminus by CCAMK. As to expression, expressed in roots.

Its subcellular location is the nucleus. Functionally, involved in symbiotic signaling. Required for root infection by symbiotic rhizobia, infection thread (IT) formation, and nodule development. Probably not involved in nodule organogenesis. Involved in arbuscular mycorrhizal (AM) symbiosis. Required for fungal infection of the outer cortical cell layers, and for arbuscule development during the AM symbiosis, by binding, as a complex comprising CCaMK, CYCLOPS, and DELLA, to RAM1 promoter cis element thus promoting its expression. Acts downstream of CCAMK. Binds to the promoter of ERN1 and strongly transactivates ERN1, a transcriptional regulator required for nodulation. This Lotus japonicus (Lotus corniculatus var. japonicus) protein is Protein CYCLOPS.